The primary structure comprises 85 residues: MFQQEVTITAPNGLHTRPAAQFVKEAKGFTSEITVTSNGKSASAKSLFKLQTLGLTQGTVVTLSAEGEDEQKAVEHLVKLMAELE.

Residues 1–85 (MFQQEVTITA…HLVKLMAELE (85 aa)) enclose the HPr domain. H15 acts as the Pros-phosphohistidine intermediate in catalysis.

The protein resides in the cytoplasm. Functionally, general (non sugar-specific) component of the phosphoenolpyruvate-dependent sugar phosphotransferase system (sugar PTS). This major carbohydrate active-transport system catalyzes the phosphorylation of incoming sugar substrates concomitantly with their translocation across the cell membrane. The phosphoryl group from phosphoenolpyruvate (PEP) is transferred to the phosphoryl carrier protein HPr by enzyme I. Phospho-HPr then transfers it to the PTS EIIA domain. This Klebsiella pneumoniae protein is Phosphocarrier protein HPr (ptsH).